An 81-amino-acid polypeptide reads, in one-letter code: Apolipoprotein C-I, acidic form (81 aa).

An N-terminal signal peptide occupies residues 1–24; the sequence is MRLFLSLLVVVLSIVLEGPTPAQG.

The protein belongs to the apolipoprotein C1 family.

The protein resides in the secreted. In Cercocebus atys (Sooty mangabey), this protein is Apolipoprotein C-I, acidic form (APOC1A).